An 81-amino-acid polypeptide reads, in one-letter code: Putative defensin-like protein 102 (81 aa).

A signal peptide spans 1–24 (MTTTMKTFVAFVLTVFFIMSSAHC). Disulfide bonds link Cys-43-Cys-78, Cys-49-Cys-71, Cys-57-Cys-76, and Cys-61-Cys-77.

It belongs to the DEFL family.

The protein resides in the secreted. The chain is Putative defensin-like protein 102 from Arabidopsis thaliana (Mouse-ear cress).